The sequence spans 408 residues: FAD-dependent monooxygenase nscC (408 aa).

Residues 1–20 form the signal peptide; the sequence is MAPPLPILIIGAGISGLTTA. Residues Glu-34 and Ala-45 each contribute to the FAD site. 2 N-linked (GlcNAc...) asparagine glycosylation sites follow: Asn-91 and Asn-103. FAD is bound at residue Arg-119. N-linked (GlcNAc...) asparagine glycans are attached at residues Asn-170 and Asn-231. Residues Asp-328 and Gly-341 each contribute to the FAD site.

The protein belongs to the paxM FAD-dependent monooxygenase family. It depends on FAD as a cofactor.

The protein operates within secondary metabolite biosynthesis. In terms of biological role, FAD-dependent monooxygenase; part of the gene cluster that mediates the biosynthesis of neosartoricin, a prenylated anthracenone that exhibits T-cell antiproliferative activity, suggestive of a physiological role as an immunosuppressive agent. The non-reducing polyketide synthase nscA probably synthesizes and cyclizes the decaketide backbone. The hydrolase nscB then mediates the product release through hydrolysis followed by spontaneous decarboxylation. The prenyltransferase nscD catalyzes the addition of the dimethylallyl group to the aromatic C5. The FAD-dependent monooxygenase nscC is then responsible for the stereospecific hydroxylation at C2. There is no gene encoding O-acetyltransferase in the nsc gene cluster; thus, the last step of 2-O-acetylation leading to neosartoricin may be catalyzed by an unidentified O-acetyltransferase. The sequence is that of FAD-dependent monooxygenase nscC from Neosartorya fischeri (strain ATCC 1020 / DSM 3700 / CBS 544.65 / FGSC A1164 / JCM 1740 / NRRL 181 / WB 181) (Aspergillus fischerianus).